A 228-amino-acid polypeptide reads, in one-letter code: Sec-independent protein translocase protein TatB (228 aa).

Residues 1 to 21 form a helical membrane-spanning segment; that stretch reads MFDFGLGELVFVGIIALIVLG. Disordered regions lie at residues 126–162 and 196–228; these read LSDG…AETD and VPHT…VRKS. Positions 206–228 are enriched in basic residues; that stretch reads AISRKRGLRPKHRAKPKLRVRKS.

Belongs to the TatB family. The Tat system comprises two distinct complexes: a TatABC complex, containing multiple copies of TatA, TatB and TatC subunits, and a separate TatA complex, containing only TatA subunits. Substrates initially bind to the TatABC complex, which probably triggers association of the separate TatA complex to form the active translocon.

The protein resides in the cell inner membrane. In terms of biological role, part of the twin-arginine translocation (Tat) system that transports large folded proteins containing a characteristic twin-arginine motif in their signal peptide across membranes. Together with TatC, TatB is part of a receptor directly interacting with Tat signal peptides. TatB may form an oligomeric binding site that transiently accommodates folded Tat precursor proteins before their translocation. The chain is Sec-independent protein translocase protein TatB from Neisseria meningitidis serogroup C / serotype 2a (strain ATCC 700532 / DSM 15464 / FAM18).